The primary structure comprises 1074 residues: Insulin receptor substrate 2-A (1074 aa).

Positions Met1 to Val64 are disordered. Short sequence motifs (YXXM motif) lie at residues Tyr33–Met36 and Tyr145–Met148. In terms of domain architecture, PH spans Asp63 to Asn168. The IRS-type PTB domain occupies Phe193–Ser297. Disordered stretches follow at residues Pro326–Arg370, Cys426–Tyr461, and Ser475–Asp510. The span at Ser347–Gly361 shows a compositional bias: polar residues. 2 stretches are compositionally biased toward low complexity: residues Cys426–Ser435 and Ser442–Gly454. Polar residues predominate over residues Ser475–Gln504. Short sequence motifs (YXXM motif) lie at residues Tyr496–Met499, Tyr592–Met595, Tyr605–Met608, Tyr631–Met634, Tyr663–Met666, and Tyr710–Met713. Residues Thr801 to Arg821 are disordered. Low complexity predominate over residues Ser804 to Ser817. The YXXM motif 9 motif lies at Tyr888–Met891.

Phosphorylated by INSR.

Its function is as follows. Potentiates insulin signaling. The chain is Insulin receptor substrate 2-A (irs2-a) from Xenopus laevis (African clawed frog).